A 123-amino-acid polypeptide reads, in one-letter code: Ribonuclease P protein component (123 aa).

Belongs to the RnpA family. In terms of assembly, consists of a catalytic RNA component (M1 or rnpB) and a protein subunit.

The enzyme catalyses Endonucleolytic cleavage of RNA, removing 5'-extranucleotides from tRNA precursor.. Functionally, RNaseP catalyzes the removal of the 5'-leader sequence from pre-tRNA to produce the mature 5'-terminus. It can also cleave other RNA substrates such as 4.5S RNA. The protein component plays an auxiliary but essential role in vivo by binding to the 5'-leader sequence and broadening the substrate specificity of the ribozyme. This chain is Ribonuclease P protein component, found in Herpetosiphon aurantiacus (strain ATCC 23779 / DSM 785 / 114-95).